The primary structure comprises 318 residues: MNQDTQSANTQQEKKIAYNFNKLQKRLRRNVGNAIADFNMIEDGDKVMVCLSGGKDSYTLLDILLNLKLSAPIHFDIVAVNLDQKQPGFPEHTLPEYLESIGVEYKIVEENTYGIVKEKIPEGKTTCSLCSRLRRGILYRTATELGATKIALGHHRDDMLETLFLNMFYGGKLKSMPPKLISDDGKQIVIRPLAYCKEKDIEKYSQAKQFPIIPCNLCGSQPNLQRQVVKEMLQTWDRQYPGRIETMFSAMQNITLSHLCDPSLFDFKGLKLGQVLDGVEGDIAFDKAEIPNQPLIQDEDEQTTDYGENGMIQFKQVQ.

The PP-loop motif signature appears at 52–57; sequence SGGKDS. [4Fe-4S] cluster contacts are provided by Cys127, Cys130, and Cys218.

Belongs to the TtcA family. Homodimer. Requires Mg(2+) as cofactor. It depends on [4Fe-4S] cluster as a cofactor.

It localises to the cytoplasm. The catalysed reaction is cytidine(32) in tRNA + S-sulfanyl-L-cysteinyl-[cysteine desulfurase] + AH2 + ATP = 2-thiocytidine(32) in tRNA + L-cysteinyl-[cysteine desulfurase] + A + AMP + diphosphate + H(+). It functions in the pathway tRNA modification. Its function is as follows. Catalyzes the ATP-dependent 2-thiolation of cytidine in position 32 of tRNA, to form 2-thiocytidine (s(2)C32). The sulfur atoms are provided by the cysteine/cysteine desulfurase (IscS) system. This is tRNA-cytidine(32) 2-sulfurtransferase from Actinobacillus pleuropneumoniae serotype 7 (strain AP76).